A 273-amino-acid polypeptide reads, in one-letter code: Acetyl-coenzyme A carboxylase carboxyl transferase subunit alpha (273 aa).

The 244-residue stretch at 1–244 (MKKATQSKAW…KVVLKQALDE (244 aa)) folds into the CoA carboxyltransferase C-terminal domain.

Belongs to the AccA family. As to quaternary structure, acetyl-CoA carboxylase is a heterohexamer composed of biotin carboxyl carrier protein (AccB), biotin carboxylase (AccC) and two subunits each of ACCase subunit alpha (AccA) and ACCase subunit beta (AccD).

The protein localises to the cytoplasm. It carries out the reaction N(6)-carboxybiotinyl-L-lysyl-[protein] + acetyl-CoA = N(6)-biotinyl-L-lysyl-[protein] + malonyl-CoA. It participates in lipid metabolism; malonyl-CoA biosynthesis; malonyl-CoA from acetyl-CoA: step 1/1. In terms of biological role, component of the acetyl coenzyme A carboxylase (ACC) complex. First, biotin carboxylase catalyzes the carboxylation of biotin on its carrier protein (BCCP) and then the CO(2) group is transferred by the carboxyltransferase to acetyl-CoA to form malonyl-CoA. The chain is Acetyl-coenzyme A carboxylase carboxyl transferase subunit alpha from Acinetobacter baumannii (strain ACICU).